A 490-amino-acid chain; its full sequence is UDP-N-acetylmuramate--L-alanine ligase (490 aa).

Residue 122–128 coordinates ATP; sequence GTHGKTS.

The protein belongs to the MurCDEF family.

It is found in the cytoplasm. It carries out the reaction UDP-N-acetyl-alpha-D-muramate + L-alanine + ATP = UDP-N-acetyl-alpha-D-muramoyl-L-alanine + ADP + phosphate + H(+). The protein operates within cell wall biogenesis; peptidoglycan biosynthesis. Cell wall formation. This is UDP-N-acetylmuramate--L-alanine ligase from Mycobacteroides abscessus (strain ATCC 19977 / DSM 44196 / CCUG 20993 / CIP 104536 / JCM 13569 / NCTC 13031 / TMC 1543 / L948) (Mycobacterium abscessus).